The following is a 310-amino-acid chain: Protein translocase subunit SecF (310 aa).

The next 6 membrane-spanning stretches (helical) occupy residues 18–38, 135–155, 162–182, 188–208, 240–260, and 267–287; these read FFTI…YRGG, QAVY…AFRF, IVSV…VILA, ITIV…TIVL, IVTS…GGEV, and IMII…APLI.

This sequence belongs to the SecD/SecF family. SecF subfamily. In terms of assembly, forms a complex with SecD. Part of the essential Sec protein translocation apparatus which comprises SecA, SecYEG and auxiliary proteins SecDF. Other proteins may also be involved.

The protein resides in the cell inner membrane. In terms of biological role, part of the Sec protein translocase complex. Interacts with the SecYEG preprotein conducting channel. SecDF uses the proton motive force (PMF) to complete protein translocation after the ATP-dependent function of SecA. This is Protein translocase subunit SecF from Endomicrobium trichonymphae.